We begin with the raw amino-acid sequence, 151 residues long: Macrodomain Ter protein (151 aa).

This sequence belongs to the MatP family. As to quaternary structure, homodimer.

It localises to the cytoplasm. Its function is as follows. Required for spatial organization of the terminus region of the chromosome (Ter macrodomain) during the cell cycle. Prevents early segregation of duplicated Ter macrodomains during cell division. Binds specifically to matS, which is a 13 bp signature motif repeated within the Ter macrodomain. This Cronobacter sakazakii (strain ATCC BAA-894) (Enterobacter sakazakii) protein is Macrodomain Ter protein.